The sequence spans 497 residues: Protein nucleotidyltransferase YdiU (497 aa).

ATP-binding residues include G88, G90, R91, K110, D122, G123, R173, and R180. Catalysis depends on D249, which acts as the Proton acceptor. N250 and D259 together coordinate Mg(2+). D259 provides a ligand contact to ATP. The tract at residues F477–T497 is disordered.

It belongs to the SELO family. Mg(2+) serves as cofactor. It depends on Mn(2+) as a cofactor.

The enzyme catalyses L-seryl-[protein] + ATP = 3-O-(5'-adenylyl)-L-seryl-[protein] + diphosphate. It carries out the reaction L-threonyl-[protein] + ATP = 3-O-(5'-adenylyl)-L-threonyl-[protein] + diphosphate. The catalysed reaction is L-tyrosyl-[protein] + ATP = O-(5'-adenylyl)-L-tyrosyl-[protein] + diphosphate. It catalyses the reaction L-histidyl-[protein] + UTP = N(tele)-(5'-uridylyl)-L-histidyl-[protein] + diphosphate. The enzyme catalyses L-seryl-[protein] + UTP = O-(5'-uridylyl)-L-seryl-[protein] + diphosphate. It carries out the reaction L-tyrosyl-[protein] + UTP = O-(5'-uridylyl)-L-tyrosyl-[protein] + diphosphate. Its function is as follows. Nucleotidyltransferase involved in the post-translational modification of proteins. It can catalyze the addition of adenosine monophosphate (AMP) or uridine monophosphate (UMP) to a protein, resulting in modifications known as AMPylation and UMPylation. The sequence is that of Protein nucleotidyltransferase YdiU from Methylorubrum extorquens (strain PA1) (Methylobacterium extorquens).